Consider the following 291-residue polypeptide: NAD kinase (291 aa).

The active-site Proton acceptor is Asp-55. Residues 55–56 (DG), Arg-60, 130–131 (NE), Asp-160, and 171–176 (TAYAFS) each bind NAD(+).

This sequence belongs to the NAD kinase family. Requires a divalent metal cation as cofactor.

Its subcellular location is the cytoplasm. The enzyme catalyses NAD(+) + ATP = ADP + NADP(+) + H(+). In terms of biological role, involved in the regulation of the intracellular balance of NAD and NADP, and is a key enzyme in the biosynthesis of NADP. Catalyzes specifically the phosphorylation on 2'-hydroxyl of the adenosine moiety of NAD to yield NADP. This chain is NAD kinase, found in Corynebacterium glutamicum (strain ATCC 13032 / DSM 20300 / JCM 1318 / BCRC 11384 / CCUG 27702 / LMG 3730 / NBRC 12168 / NCIMB 10025 / NRRL B-2784 / 534).